The following is a 94-amino-acid chain: DNA-binding protein HU (94 aa).

The protein belongs to the bacterial histone-like protein family. In terms of assembly, homodimer.

Functionally, histone-like DNA-binding protein which is capable of wrapping DNA to stabilize it, and thus to prevent its denaturation under extreme environmental conditions. It is essential for heterocyst differentiation. In Nostoc sp. (strain PCC 7120 / SAG 25.82 / UTEX 2576), this protein is DNA-binding protein HU (hup).